Consider the following 573-residue polypeptide: Pyrophosphate--fructose 6-phosphate 1-phosphotransferase (573 aa).

Gly90 contributes to the diphosphate binding site. Residue Asp184 participates in Mg(2+) binding. Residues 212 to 214 (TID), 251 to 252 (KY), 259 to 261 (MGR), Glu320, and 434 to 437 (YEGR) contribute to the substrate site. Residue Asp214 is the Proton acceptor of the active site.

It belongs to the phosphofructokinase type A (PFKA) family. PPi-dependent PFK group II subfamily. Clade 'Long' sub-subfamily. In terms of assembly, homodimer. The cofactor is Mg(2+).

The protein localises to the cytoplasm. The enzyme catalyses beta-D-fructose 6-phosphate + diphosphate = beta-D-fructose 1,6-bisphosphate + phosphate + H(+). It functions in the pathway carbohydrate degradation; glycolysis; D-glyceraldehyde 3-phosphate and glycerone phosphate from D-glucose: step 3/4. Its activity is regulated as follows. Non-allosteric. In terms of biological role, catalyzes the phosphorylation of D-fructose 6-phosphate, the first committing step of glycolysis. Uses inorganic phosphate (PPi) as phosphoryl donor instead of ATP like common ATP-dependent phosphofructokinases (ATP-PFKs), which renders the reaction reversible, and can thus function both in glycolysis and gluconeogenesis. Consistently, PPi-PFK can replace the enzymes of both the forward (ATP-PFK) and reverse (fructose-bisphosphatase (FBPase)) reactions. This chain is Pyrophosphate--fructose 6-phosphate 1-phosphotransferase, found in Treponema pallidum (strain Nichols).